The following is a 1534-amino-acid chain: Dicer-like protein 2 (1534 aa).

Positions 1–10 are enriched in basic and acidic residues; that stretch reads MDQDPRKDNP. The interval 1–36 is disordered; the sequence is MDQDPRKDNPVEMDVDRDDSSQDPDDNESFKSALDE. Positions 11 to 27 are enriched in acidic residues; that stretch reads VEMDVDRDDSSQDPDDN. In terms of domain architecture, Helicase ATP-binding spans 65–249; sequence TPAALTARAY…IEKLEQVLDA (185 aa). 78-85 lines the ATP pocket; that stretch reads MFEASLKQ. The short motif at 192–195 is the DEAH box element; it reads DEAH. The region spanning 404 to 575 is the Helicase C-terminal domain; that stretch reads KVQTLLKVLA…NAELELLDDP (172 aa). The 104-residue stretch at 597 to 700 folds into the Dicer dsRNA-binding fold domain; it reads ARSHLNHFCA…LPTKVSDFLA (104 aa). RNase III domains follow at residues 959–1107 and 1153–1353; these read MSLV…MCGG and LEPL…VDSG. Positions 1193, 1339, and 1342 each coordinate Mg(2+). In terms of domain architecture, DRBM spans 1383–1483; it reads HPNVELQILA…AEKGCLVIKA (101 aa). Residues 1492-1504 show a composition bias toward basic and acidic residues; that stretch reads KAAAKEDKGHNTE. The disordered stretch occupies residues 1492–1534; sequence KAAAKEDKGHNTENGDANADNGQSGEKEEVPDCRDADGDTVMN. A compositionally biased stretch (polar residues) spans 1505 to 1515; it reads NGDANADNGQS. Basic and acidic residues predominate over residues 1516 to 1528; it reads GEKEEVPDCRDAD.

The protein belongs to the helicase family. Dicer subfamily. It depends on Mg(2+) as a cofactor. Requires Mn(2+) as cofactor.

Functionally, dicer-like endonuclease involved in cleaving double-stranded RNA in the RNA interference (RNAi) pathway. Produces 21 to 25 bp dsRNAs (siRNAs) which target the selective destruction of homologous RNAs leading to sequence-specific suppression of gene expression, called post-transcriptional gene silencing (PTGS). Part of a broad host defense response against viral infection and transposons. Controls the expression of the non-LTR retrotransposon Tad in the African strain, Adiomopoume. This chain is Dicer-like protein 2 (dcl-2), found in Neurospora crassa (strain ATCC 24698 / 74-OR23-1A / CBS 708.71 / DSM 1257 / FGSC 987).